A 615-amino-acid chain; its full sequence is Pre-hexon-linking protein IIIa (615 aa).

Residues 1–92 (MDPGLKPSSS…DLLIRVHKYN (92 aa)) form a peripentonal hexon-tethering domain region. The segment at 124-238 (SNQVILNDFL…FTNENTFTPD (115 aa)) is binding to hexon-linking protein. At Ser-212 the chain carries Phosphoserine; by host. The residue at position 262 (Thr-262) is a Phosphothreonine; by host. A compositionally biased stretch (basic and acidic residues) spans 400–409 (EREALEEAGP). Disordered regions lie at residues 400–473 (EREA…SVDS) and 528–615 (GERI…NGLK). 2 stretches are compositionally biased toward low complexity: residues 419–430 (PSSSPQSSKIQS) and 451–460 (SVRSAPPSVS). Ser-451 is subject to Phosphoserine; by host. Residues 539 to 548 (RAEIERRRIA) show a composition bias toward basic and acidic residues. Positions 557 to 570 (PSLSSESSAPSLSS) are enriched in low complexity. The propeptide occupies 602-615 (GNPFDYLRPRNGLK).

Belongs to the adenoviridae hexon-linking protein IIIa family. As to quaternary structure, interacts with hexon proteins; this interaction tethers the peripentonal hexons to hexons situated in the facet. Interacts with the penton protein (via N-terminus). Interacts with packaging protein 3; this interaction is required to promote correct genome packaging. In terms of processing, cleaved near the C-terminus by the viral protease during virion maturation to form the mature protein.

It localises to the virion. It is found in the host nucleus. Structural component of the virion that acts as a cement protein on the capsid exterior which mediates the interactions between the hexons, including the peripentonal hexons, and reaches all the way to the penton vertices. Two hexon linking proteins IIIa, one from each facet, stabilize the unique edge interface between a pair of facets. As the virus enters the host cell, hexon linking proteins IIIa are shed concomitant with virion acidification in the endosome. During virus assembly, seems to play a role in the serotype specificity of the packaging of viral DNA via its interaction with packaging protein 3. This is Pre-hexon-linking protein IIIa from Snake adenovirus serotype 1 (SnAdV-1).